We begin with the raw amino-acid sequence, 98 residues long: Large ribosomal subunit protein uL23 (98 aa).

Belongs to the universal ribosomal protein uL23 family. In terms of assembly, part of the 50S ribosomal subunit. Contacts protein L29, and trigger factor when it is bound to the ribosome.

In terms of biological role, one of the early assembly proteins it binds 23S rRNA. One of the proteins that surrounds the polypeptide exit tunnel on the outside of the ribosome. Forms the main docking site for trigger factor binding to the ribosome. This chain is Large ribosomal subunit protein uL23, found in Clostridium acetobutylicum (strain ATCC 824 / DSM 792 / JCM 1419 / IAM 19013 / LMG 5710 / NBRC 13948 / NRRL B-527 / VKM B-1787 / 2291 / W).